A 165-amino-acid polypeptide reads, in one-letter code: Cyclic pyranopterin monophosphate synthase (165 aa).

Substrate is bound by residues 76-78 and 113-114; these read MCH and IE. The active site involves aspartate 128.

This sequence belongs to the MoaC family. As to quaternary structure, homohexamer; trimer of dimers.

The catalysed reaction is (8S)-3',8-cyclo-7,8-dihydroguanosine 5'-triphosphate = cyclic pyranopterin phosphate + diphosphate. The protein operates within cofactor biosynthesis; molybdopterin biosynthesis. Catalyzes the conversion of (8S)-3',8-cyclo-7,8-dihydroguanosine 5'-triphosphate to cyclic pyranopterin monophosphate (cPMP). This is Cyclic pyranopterin monophosphate synthase from Limosilactobacillus fermentum (strain NBRC 3956 / LMG 18251) (Lactobacillus fermentum).